We begin with the raw amino-acid sequence, 237 residues long: Ribonuclease PH (237 aa).

Residues Arg86 and 124 to 126 (GTR) contribute to the phosphate site.

The protein belongs to the RNase PH family. As to quaternary structure, homohexameric ring arranged as a trimer of dimers.

It carries out the reaction tRNA(n+1) + phosphate = tRNA(n) + a ribonucleoside 5'-diphosphate. Phosphorolytic 3'-5' exoribonuclease that plays an important role in tRNA 3'-end maturation. Removes nucleotide residues following the 3'-CCA terminus of tRNAs; can also add nucleotides to the ends of RNA molecules by using nucleoside diphosphates as substrates, but this may not be physiologically important. Probably plays a role in initiation of 16S rRNA degradation (leading to ribosome degradation) during starvation. In Rhodopseudomonas palustris (strain HaA2), this protein is Ribonuclease PH.